Here is a 423-residue protein sequence, read N- to C-terminus: Zinc finger protein Gfi-1 (423 aa).

The segment at 1 to 20 is SNAG domain; it reads MPRSFLVKSKKAHSYHQPRS. The interval 1 to 102 is disordered; it reads MPRSFLVKSK…PPSPSVSPAS (102 aa). 2 positions are modified to phosphoserine: S20 and S57. Over residues 48–57 the composition is skewed to basic and acidic residues; sequence SKMEPRERLS. The interval 141–258 is required for interaction with RELA; the sequence is RQCSALERSA…LLLGGGSYKC (118 aa). C2H2-type zinc fingers lie at residues 256–279, 285–307, 313–335, 341–363, 369–391, and 397–420; these read YKCIKCSKVFSTPHGLEVHVRRSH, FACEMCGKTFGHAVSLEQHKAVH, FDCKICGKSFKRSSTLSTHLLIH, YPCQYCGKRFHQKSDMKKHTFIH, HKCQVCGKAFSQSSNLITHSRKH, and FGCDLCGKGFQRKVDLRRHRETQH.

Interacts with U2AF1L4. Component of RCOR-GFI-KDM1A-HDAC complexes. Interacts directly with RCOR1, KDM1A and HDAC2. Also interacts with HDAC1. regions. Interacts (via the zinc-finger domain) with ARIH2; the interaction prevents GFI1 ubiquitination and proteasomal degradation. Interacts with PIAS3; the interaction relieves the inhibitory effect of PIAS3 on STAT3-mediated transcriptional activity. Forms a complex with EHMT2 and HDAC1 to promote 'Lys-9' dimethylation of H3 (H3K9Me2) and repress expression of target genes. Interacts directly with EHMT2. Component of the GFI1-AJUBA-HDAC1 repressor complex. Interacts directly with AJUBA (via ITS LIM domains); the interaction results in the HDAC-dependent corepression of a subset of GFI1 target genes and, occurs independent of the SNAG domain. Interacts with SPI1; the interaction inhibits SPI1 transcriptional activity targeted at macrophage-specific genes, repressing macrophage differentiation of myeloid progenitor cells and promoting granulocyte commitment. Interacts with RUNX1T1; the interaction represses HDAC-mediated transcriptional activity. Interacts with RELA; the interaction occurs on liposaccharide (LPS) stimulation controls RELA DNA binding activity and regulates endotoxin-mediated TOLL-like receptor inflammatory response. Interacts (via the C-terminal zinc fingers) with ZBTB17; the interaction results in the recruitment of GFI1 to the CDKN1A/p21 promoter and repression of CDKN1A/p21 transcription. In terms of processing, ubiquitinated. Restricted to lymphoid tissues and testes in adult animals.

Its subcellular location is the nucleus. Its function is as follows. Transcription repressor essential for hematopoiesis. Functions in a cell-context and development-specific manner. Binds to 5'-TAAATCAC[AT]GCA-3' in the promoter region of a large number of genes. Component of several complexes, including the EHMT2-GFI1-HDAC1, AJUBA-GFI1-HDAC1 and RCOR-GFI-KDM1A-HDAC complexes, that suppress, via histone deacetylase (HDAC) recruitment, a number of genes implicated in multilineage blood cell development. Regulates neutrophil differentiation, promotes proliferation of lymphoid cells, and is required for granulocyte development. Inhibits SPI1 transcriptional activity at macrophage-specific genes, repressing macrophage differentiation of myeloid progenitor cells and promoting granulocyte commitment. Mediates, together with U2AF1L4, the alternative splicing of CD45 and controls T-cell receptor signaling. Regulates the endotoxin-mediated Toll-like receptor (TLR) inflammatory response by antagonizing RELA. Cooperates with CBFA2T2 to regulate ITGB1-dependent neurite growth. Controls cell-cycle progression by repressing CDKNIA/p21 transcription in response to TGFB1 via recruitment of GFI1 by ZBTB17 to the CDKNIA/p21 and CDKNIB promoters. Required for the maintenance of inner ear hair cells. In addition to its role in transcription, acts as a substrate adapter for PRMT1 in the DNA damage response: facilitates the recognition of TP53BP1 and MRE11 substrates by PRMT1, promoting their methylation and the DNA damage response. This Rattus norvegicus (Rat) protein is Zinc finger protein Gfi-1 (Gfi1).